The following is a 419-amino-acid chain: Putative L-glutamine:3-amino-2,3-dideoxy-scyllo-inosose aminotransferase (419 aa).

Lys199 bears the N6-(pyridoxal phosphate)lysine mark.

Belongs to the DegT/DnrJ/EryC1 family. L-glutamine:2-deoxy-scyllo-inosose/scyllo-inosose aminotransferase subfamily. The cofactor is pyridoxal 5'-phosphate.

The enzyme catalyses 3-amino-2,3-dideoxy-scyllo-inosose + L-glutamine = 2-deoxystreptamine + 2-oxoglutaramate. It functions in the pathway metabolic intermediate biosynthesis; 2-deoxystreptamine biosynthesis; 2-deoxystreptamine from D-glucose 6-phosphate: step 4/4. Its pathway is antibiotic biosynthesis; kanamycin biosynthesis. Its function is as follows. Catalyzes the transamination of 3-amino-2,3-dideoxy-scyllo-inosose (amino-DOI) into 2-deoxystreptamine (DOS). This Streptomyces kanamyceticus protein is Putative L-glutamine:3-amino-2,3-dideoxy-scyllo-inosose aminotransferase (kanD).